The following is a 712-amino-acid chain: Secretin OutD (712 aa).

The N-terminal stretch at 1-27 (MLGKGIKKSWGWLGLTVLLLGSPCGWA) is a signal peptide. Positions 28 to 124 (AEFSASFKGT…LANNEQPGVG (97 aa)) are N0. The segment at 126–190 (ELVTRVVPLN…DIVNTVDKTG (65 aa)) is N1. The segment at 191–264 (DREMITVSLN…MIRQLDRKQV (74 aa)) is N2. An N3 region spans residues 267 to 394 (GGTKVIYLKY…DLEQVINQLD (128 aa)). Residues 288 to 342 (GNGTSGNRNSSSTNSSRPSSTRSSSTLNNSNSSSSGSSSGSGSSSSSSSSSMGFG) are disordered. The segment at 399 to 651 (QVLVEAIIAE…LFLRPTIIRD (253 aa)) is secretin. The tract at residues 653–712 (QQYQQASISKYNSFNNEQQQQRGQGNSVLDNNTLRLSGGNTYTFRQVQSSISAFYQPEGR) is s domain.

It belongs to the bacterial secretin family. GSP D subfamily. Forms a cylindrical channel with 15 subunits.

The protein localises to the cell outer membrane. Its function is as follows. Involved in a type II secretion system (T2SS, formerly general secretion pathway, GSP) for the export of proteins. Required for the translocation of the multiple pectic enzymes. This subunit forms the outer membrane channel. The polypeptide is Secretin OutD (outD) (Dickeya chrysanthemi (Pectobacterium chrysanthemi)).